The chain runs to 529 residues: Polygalacturonase (529 aa).

The signal sequence occupies residues 1–21 (MNHRYTLLALAAAALSAGAHA). The Proton donor role is filled by Asp305. His331 is a catalytic residue. Positions 516-529 (AFVPLKSVAPTSPI) are required for PGA export across the outer membrane and catalytic activity.

It belongs to the glycosyl hydrolase 28 family. Monomer.

The protein localises to the secreted. It catalyses the reaction (1,4-alpha-D-galacturonosyl)n+m + H2O = (1,4-alpha-D-galacturonosyl)n + (1,4-alpha-D-galacturonosyl)m.. Its function is as follows. Contributes to the wilt disease production on tomato. The chain is Polygalacturonase (pglA) from Ralstonia solanacearum (Pseudomonas solanacearum).